Here is a 229-residue protein sequence, read N- to C-terminus: Ribonuclease T (229 aa).

Residues 23-197 (VIIDVETAGF…YDTERTAKLF (175 aa)) enclose the Exonuclease domain. Mg(2+) contacts are provided by aspartate 26, glutamate 28, histidine 184, and aspartate 189. Histidine 184 acts as the Proton donor/acceptor in catalysis.

The protein belongs to the RNase T family. In terms of assembly, homodimer. Requires Mg(2+) as cofactor.

Its function is as follows. Trims short 3' overhangs of a variety of RNA species, leaving a one or two nucleotide 3' overhang. Responsible for the end-turnover of tRNA: specifically removes the terminal AMP residue from uncharged tRNA (tRNA-C-C-A). Also appears to be involved in tRNA biosynthesis. This chain is Ribonuclease T, found in Haemophilus influenzae (strain 86-028NP).